The following is a 101-amino-acid chain: Threonine-rich inner membrane protein GfcA (101 aa).

The N-terminal stretch at 1–21 (MKHKLSAILMAFMLTTPAAFA) is a signal peptide. The Cytoplasmic portion of the chain corresponds to 22-59 (APEATNGTEATTGTTGTTTTTTGATTTATTTGGVAAGA). The disordered stretch occupies residues 24–45 (EATNGTEATTGTTGTTTTTTGA). The chain crosses the membrane as a helical span at residues 60–80 (VGTATVVGVATAVGVATLAVV). At 81–101 (AANDSGDGGSHNTSTTTSTTR) the chain is on the periplasmic side. Residues 82–101 (ANDSGDGGSHNTSTTTSTTR) form a disordered region.

It localises to the cell inner membrane. In Escherichia coli (strain K12), this protein is Threonine-rich inner membrane protein GfcA (gfcA).